We begin with the raw amino-acid sequence, 203 residues long: Outer-membrane lipoprotein LolB (203 aa).

A signal peptide spans 1 to 20 (MNRSRRLALLCLGVPLLLQA). A lipid anchor (N-palmitoyl cysteine) is attached at Cys-21. Cys-21 is lipidated: S-diacylglycerol cysteine.

Belongs to the LolB family. In terms of assembly, monomer.

It is found in the cell outer membrane. In terms of biological role, plays a critical role in the incorporation of lipoproteins in the outer membrane after they are released by the LolA protein. The chain is Outer-membrane lipoprotein LolB from Cupriavidus taiwanensis (strain DSM 17343 / BCRC 17206 / CCUG 44338 / CIP 107171 / LMG 19424 / R1) (Ralstonia taiwanensis (strain LMG 19424)).